Here is a 556-residue protein sequence, read N- to C-terminus: Hydroxylamine reductase (556 aa).

4 residues coordinate [4Fe-4S] cluster: cysteine 4, cysteine 7, cysteine 19, and cysteine 26. The hybrid [4Fe-2O-2S] cluster site is built by histidine 252, glutamate 276, cysteine 320, cysteine 407, cysteine 435, cysteine 460, glutamate 494, and lysine 496. At cysteine 407 the chain carries Cysteine persulfide.

The protein belongs to the HCP family. [4Fe-4S] cluster is required as a cofactor. The cofactor is hybrid [4Fe-2O-2S] cluster.

The protein resides in the cytoplasm. It catalyses the reaction A + NH4(+) + H2O = hydroxylamine + AH2 + H(+). In terms of biological role, catalyzes the reduction of hydroxylamine to form NH(3) and H(2)O. The chain is Hydroxylamine reductase from Acidithiobacillus ferridurans.